We begin with the raw amino-acid sequence, 443 residues long: Ribosomal protein uS12 methylthiotransferase RimO (443 aa).

In terms of domain architecture, MTTase N-terminal spans 1 to 116 (MKFHLISLGC…IAEYVGKLIA (116 aa)). 6 residues coordinate [4Fe-4S] cluster: Cys-10, Cys-45, Cys-79, Cys-154, Cys-158, and Cys-161. Residues 140 to 370 (STPFFRAWVK…LELQQELSTE (231 aa)) form the Radical SAM core domain. The TRAM domain maps to 373-441 (KKYVGTVQKV…QYDLVGGVVS (69 aa)).

The protein belongs to the methylthiotransferase family. RimO subfamily. [4Fe-4S] cluster serves as cofactor.

It is found in the cytoplasm. It catalyses the reaction L-aspartate(89)-[ribosomal protein uS12]-hydrogen + (sulfur carrier)-SH + AH2 + 2 S-adenosyl-L-methionine = 3-methylsulfanyl-L-aspartate(89)-[ribosomal protein uS12]-hydrogen + (sulfur carrier)-H + 5'-deoxyadenosine + L-methionine + A + S-adenosyl-L-homocysteine + 2 H(+). Functionally, catalyzes the methylthiolation of an aspartic acid residue of ribosomal protein uS12. This chain is Ribosomal protein uS12 methylthiotransferase RimO, found in Desulfotalea psychrophila (strain LSv54 / DSM 12343).